The sequence spans 367 residues: UDP-N-acetylenolpyruvoylglucosamine reductase 2 (367 aa).

One can recognise an FAD-binding PCMH-type domain in the interval 31–198 (IGGKPRSAVR…LAIELQLLTD (168 aa)). The active site involves Arg-176. Ser-256 functions as the Proton donor in the catalytic mechanism. Residue Glu-357 is part of the active site.

It belongs to the MurB family. FAD is required as a cofactor.

It is found in the cytoplasm. The catalysed reaction is UDP-N-acetyl-alpha-D-muramate + NADP(+) = UDP-N-acetyl-3-O-(1-carboxyvinyl)-alpha-D-glucosamine + NADPH + H(+). It participates in cell wall biogenesis; peptidoglycan biosynthesis. In terms of biological role, cell wall formation. The chain is UDP-N-acetylenolpyruvoylglucosamine reductase 2 (murB2) from Corynebacterium glutamicum (strain ATCC 13032 / DSM 20300 / JCM 1318 / BCRC 11384 / CCUG 27702 / LMG 3730 / NBRC 12168 / NCIMB 10025 / NRRL B-2784 / 534).